Reading from the N-terminus, the 195-residue chain is ATP-dependent Clp protease proteolytic subunit (195 aa).

S101 acts as the Nucleophile in catalysis. H126 is a catalytic residue.

The protein belongs to the peptidase S14 family. As to quaternary structure, component of the chloroplastic Clp protease core complex.

It localises to the plastid. Its subcellular location is the chloroplast stroma. It catalyses the reaction Hydrolysis of proteins to small peptides in the presence of ATP and magnesium. alpha-casein is the usual test substrate. In the absence of ATP, only oligopeptides shorter than five residues are hydrolyzed (such as succinyl-Leu-Tyr-|-NHMec, and Leu-Tyr-Leu-|-Tyr-Trp, in which cleavage of the -Tyr-|-Leu- and -Tyr-|-Trp bonds also occurs).. Its function is as follows. Cleaves peptides in various proteins in a process that requires ATP hydrolysis. Has a chymotrypsin-like activity. Plays a major role in the degradation of misfolded proteins. This is ATP-dependent Clp protease proteolytic subunit from Cucumis sativus (Cucumber).